The following is a 319-amino-acid chain: Pyrroline-5-carboxylate reductase 1, mitochondrial (319 aa).

Serine 2 is subject to N-acetylserine. NADP(+) is bound by residues 6-11 (IGAGQL) and serine 34. Residues alanine 8, glutamine 10, leucine 11, serine 34, aspartate 36, asparagine 56, valine 70, lysine 71, and alanine 97 each contribute to the NADPH site. Residues asparagine 56, 69–72 (AVKP), and 95–97 (CAA) contribute to the NADP(+) site. L-proline is bound at residue glutamate 164. An NADPH-binding site is contributed by asparagine 230. 2 residues coordinate L-proline: alanine 237 and threonine 238. 2 positions are modified to phosphoserine: serine 278 and serine 301. The segment at 294–319 (SPAGTALSPSGHTKLLPRSLAPAGKD) is disordered.

This sequence belongs to the pyrroline-5-carboxylate reductase family. Homodecamer; composed of 5 homodimers. Interacts with LTO1.

It localises to the mitochondrion. The enzyme catalyses L-proline + NADP(+) = (S)-1-pyrroline-5-carboxylate + NADPH + 2 H(+). It catalyses the reaction L-proline + NAD(+) = (S)-1-pyrroline-5-carboxylate + NADH + 2 H(+). The protein operates within amino-acid biosynthesis; L-proline biosynthesis; L-proline from L-glutamate 5-semialdehyde: step 1/1. Subject to competitive inhibition by the reaction product proline. Subject to competitive inhibition by stearoyl coenzyme A. In terms of biological role, oxidoreductase that catalyzes the last step in proline biosynthesis, which corresponds to the reduction of pyrroline-5-carboxylate to L-proline using NAD(P)H. At physiologic concentrations, has higher specific activity in the presence of NADH. Involved in the cellular response to oxidative stress. The sequence is that of Pyrroline-5-carboxylate reductase 1, mitochondrial from Homo sapiens (Human).